A 141-amino-acid chain; its full sequence is Oleosin L (141 aa).

3 helical membrane-spanning segments follow: residues 23-43 (VLFFVVMGGGVLASLSALALA), 46-66 (VVLMLILTPVFLLLSPVILPV), and 74-94 (AAAFMAAVTIGIAGAAALIWV). The Proline-knot signature appears at 54–65 (PVFLLLSPVILP).

It belongs to the oleosin family. In terms of tissue distribution, expressed in megagametophytes (at protein level).

The protein localises to the lipid droplet. The protein resides in the membrane. This Pinus massoniana (Chinese red pine) protein is Oleosin L.